The primary structure comprises 204 residues: High frequency lysogenization protein HflD homolog (204 aa).

It belongs to the HflD family.

The protein resides in the cytoplasm. Its subcellular location is the cell inner membrane. This chain is High frequency lysogenization protein HflD homolog, found in Ruthia magnifica subsp. Calyptogena magnifica.